Reading from the N-terminus, the 32-residue chain is Cytochrome b6-f complex subunit 7 (32 aa).

Residues 9–27 form a helical membrane-spanning segment; sequence AAVFWILIPIGLVGGALLL.

The protein belongs to the PetM family. In terms of assembly, the 4 large subunits of the cytochrome b6-f complex are cytochrome b6, subunit IV (17 kDa polypeptide, PetD), cytochrome f and the Rieske protein, while the 4 small subunits are PetG, PetL, PetM and PetN. The complex functions as a dimer.

The protein localises to the cellular thylakoid membrane. Functionally, component of the cytochrome b6-f complex, which mediates electron transfer between photosystem II (PSII) and photosystem I (PSI), cyclic electron flow around PSI, and state transitions. The chain is Cytochrome b6-f complex subunit 7 from Prochlorococcus marinus (strain MIT 9301).